Consider the following 142-residue polypeptide: Small ribosomal subunit protein uS12 (142 aa).

A disordered region spans residues 1 to 44 (MANGKYAARKLKQDRQKHRWSDSDYARRARGLGKKSDPLEGAPQ). Positions 11 to 27 (LKQDRQKHRWSDSDYAR) are enriched in basic and acidic residues.

The protein belongs to the universal ribosomal protein uS12 family. As to quaternary structure, part of the 30S ribosomal subunit.

In terms of biological role, with S4 and S5 plays an important role in translational accuracy. Located at the interface of the 30S and 50S subunits. The chain is Small ribosomal subunit protein uS12 from Natronomonas pharaonis (strain ATCC 35678 / DSM 2160 / CIP 103997 / JCM 8858 / NBRC 14720 / NCIMB 2260 / Gabara) (Halobacterium pharaonis).